A 145-amino-acid polypeptide reads, in one-letter code: MKKITLIGSELAKTGNEFIYLGPLEECEPCRFKRICHNNLDVGTRYKIVSVRSANHPCTVHENGVKVVEVMPAEFTIIIESKKALEGVTLTHVDVHCDRVCCENYLSCHPEGISGKYRVSSILPEKVECKKGNSLKKISIVPVQQ.

Belongs to the UPF0179 family.

The protein is UPF0179 protein MmarC7_0952 of Methanococcus maripaludis (strain C7 / ATCC BAA-1331).